The sequence spans 1293 residues: DNA-directed RNA polymerase subunit beta' (1293 aa).

4 residues coordinate Zn(2+): Cys-60, Cys-62, Cys-75, and Cys-78. Residues Asp-535, Asp-537, and Asp-539 each contribute to the Mg(2+) site. Zn(2+) is bound by residues Cys-873, Cys-950, Cys-957, and Cys-960.

The protein belongs to the RNA polymerase beta' chain family. As to quaternary structure, the RNAP catalytic core consists of 2 alpha, 1 beta, 1 beta' and 1 omega subunit. When a sigma factor is associated with the core the holoenzyme is formed, which can initiate transcription. Mg(2+) serves as cofactor. It depends on Zn(2+) as a cofactor.

The catalysed reaction is RNA(n) + a ribonucleoside 5'-triphosphate = RNA(n+1) + diphosphate. Functionally, DNA-dependent RNA polymerase catalyzes the transcription of DNA into RNA using the four ribonucleoside triphosphates as substrates. The sequence is that of DNA-directed RNA polymerase subunit beta' from Cutibacterium acnes (strain DSM 16379 / KPA171202) (Propionibacterium acnes).